A 157-amino-acid chain; its full sequence is ATP synthase subunit b (157 aa).

A helical transmembrane segment spans residues 11 to 31 (LIMFAMFTWFCMKFIWPPIVM).

It belongs to the ATPase B chain family. F-type ATPases have 2 components, F(1) - the catalytic core - and F(0) - the membrane proton channel. F(1) has five subunits: alpha(3), beta(3), gamma(1), delta(1), epsilon(1). F(0) has three main subunits: a(1), b(2) and c(10-14). The alpha and beta chains form an alternating ring which encloses part of the gamma chain. F(1) is attached to F(0) by a central stalk formed by the gamma and epsilon chains, while a peripheral stalk is formed by the delta and b chains.

Its subcellular location is the cell inner membrane. In terms of biological role, f(1)F(0) ATP synthase produces ATP from ADP in the presence of a proton or sodium gradient. F-type ATPases consist of two structural domains, F(1) containing the extramembraneous catalytic core and F(0) containing the membrane proton channel, linked together by a central stalk and a peripheral stalk. During catalysis, ATP synthesis in the catalytic domain of F(1) is coupled via a rotary mechanism of the central stalk subunits to proton translocation. Component of the F(0) channel, it forms part of the peripheral stalk, linking F(1) to F(0). This chain is ATP synthase subunit b, found in Vesicomyosocius okutanii subsp. Calyptogena okutanii (strain HA).